The sequence spans 314 residues: N-acyl-aromatic-L-amino acid amidohydrolase (carboxylate-forming) B (314 aa).

Zn(2+)-binding residues include His-19 and Glu-22. Substrate is bound by residues Arg-63 and 70–71 (NR). His-116 provides a ligand contact to Zn(2+). Residues Glu-178 and Tyr-289 each contribute to the substrate site.

It belongs to the AspA/AstE family. Aspartoacylase subfamily. Homotetramer. The cofactor is Zn(2+).

The protein resides in the apical cell membrane. Its subcellular location is the cytoplasm. It carries out the reaction an N-acyl-aromatic L-alpha-amino acid + H2O = an aromatic L-alpha-amino acid + a carboxylate. The catalysed reaction is an N-acetyl-L-cysteine-S-conjugate + H2O = an S-substituted L-cysteine + acetate. In terms of biological role, plays an important role in deacetylating mercapturic acids in kidney proximal tubules. The sequence is that of N-acyl-aromatic-L-amino acid amidohydrolase (carboxylate-forming) B (acy3.2) from Danio rerio (Zebrafish).